Consider the following 502-residue polypeptide: Lysine--tRNA ligase (502 aa).

Mg(2+) contacts are provided by Glu-413 and Glu-420.

Belongs to the class-II aminoacyl-tRNA synthetase family. Homodimer. The cofactor is Mg(2+).

The protein localises to the cytoplasm. The enzyme catalyses tRNA(Lys) + L-lysine + ATP = L-lysyl-tRNA(Lys) + AMP + diphosphate. The protein is Lysine--tRNA ligase (lysS) of Haemophilus influenzae (strain ATCC 51907 / DSM 11121 / KW20 / Rd).